The sequence spans 239 residues: Large ribosomal subunit protein uL1 (239 aa).

Belongs to the universal ribosomal protein uL1 family. Part of the 50S ribosomal subunit.

Its function is as follows. Binds directly to 23S rRNA. The L1 stalk is quite mobile in the ribosome, and is involved in E site tRNA release. In terms of biological role, protein L1 is also a translational repressor protein, it controls the translation of the L11 operon by binding to its mRNA. This Mycolicibacterium gilvum (strain PYR-GCK) (Mycobacterium gilvum (strain PYR-GCK)) protein is Large ribosomal subunit protein uL1.